A 400-amino-acid chain; its full sequence is Phosphoglycerate kinase (400 aa).

Residues 21–23 (DFN), R36, 59–62 (HCSR), R118, and R151 contribute to the substrate site. ATP contacts are provided by residues K201, E323, and 353–356 (GGDT).

The protein belongs to the phosphoglycerate kinase family. Monomer.

The protein localises to the cytoplasm. It catalyses the reaction (2R)-3-phosphoglycerate + ATP = (2R)-3-phospho-glyceroyl phosphate + ADP. It participates in carbohydrate degradation; glycolysis; pyruvate from D-glyceraldehyde 3-phosphate: step 2/5. In Bartonella bacilliformis (strain ATCC 35685 / KC583 / Herrer 020/F12,63), this protein is Phosphoglycerate kinase.